Here is a 319-residue protein sequence, read N- to C-terminus: Putative G-protein coupled receptor B0244.7 (319 aa).

The N-linked (GlcNAc...) asparagine glycan is linked to N28. Transmembrane regions (helical) follow at residues 49 to 69 (AIFIIPCCMSFFALFLNIYIF), 107 to 127 (LPVIIFLTHFNFWVIALFIIF), 131 to 151 (SFLSFIGGMVGTTLTIYIAVV), 166 to 186 (VLLILLLWVSAITVAISCGIV), 206 to 226 (GPVLIFGIVCIATAFSICLVI), and 261 to 281 (LFAGFFVFATMAIFEIASAII).

It belongs to the G-protein coupled receptor 1 family. B0244 subfamily.

It localises to the cell membrane. The polypeptide is Putative G-protein coupled receptor B0244.7 (Caenorhabditis elegans).